Consider the following 627-residue polypeptide: Sodium- and chloride-dependent GABA transporter 3 (627 aa).

The segment at 1 to 36 is disordered; sequence MTAEQALPLGNGKAAEEARGSEALGGGGGGAAGTRE. Topologically, residues 1–53 are cytoplasmic; it reads MTAEQALPLGNGKAAEEARGSEALGGGGGGAAGTREARDKAVHERGHWNNKVE. A Phosphoserine modification is found at serine 21. The span at 23-32 shows a compositional bias: gly residues; that stretch reads ALGGGGGGAA. Transmembrane regions (helical) follow at residues 54–74, 82–101, and 126–146; these read FVLSVAGEIIGLGNVWRFPYL, AFLIPYVVFFICCGIPVFFL, and GIGYATQVIEAHLNVYYIIIL. The Extracellular segment spans residues 147–220; it reads AWAIFYLSNC…DGIEHIGNLR (74 aa). N-linked (GlcNAc...) asparagine glycans are attached at residues asparagine 182, asparagine 185, and asparagine 193. A run of 9 helical transmembrane segments spans residues 221–239, 248–265, 301–318, 330–351, 384–403, 433–451, 468–488, 509–528, and 548–566; these read WELALCLLAAWTICYFCIW, VVYVTATFPYIMLLILLI, IFFSYAICLGCLTALGSY, IMLCCLNSGTSFVAGFAIFSVL, MPLSPLWATLFFMMLIFLGL, LLILALSIVSYFLGLVMLT, GMCLLFVAIFECVCIGWVYGS, WCWKVVTPGICAGIFIFFLV, and IGWLMALSSMLCIPLWIFI. At 567–627 the chain is on the cytoplasmic side; the sequence is KLWKTEGTLP…SAITEKETHF (61 aa).

This sequence belongs to the sodium:neurotransmitter symporter (SNF) (TC 2.A.22) family. SLC6A11 subfamily. As to expression, brain and retina. Expressed predominantly within neurons. Expressed in the hippocampus (at protein level).

Its subcellular location is the cell membrane. It carries out the reaction 4-aminobutanoate(out) + chloride(out) + 2 Na(+)(out) = 4-aminobutanoate(in) + chloride(in) + 2 Na(+)(in). It catalyses the reaction taurine(out) + chloride(out) + 2 Na(+)(out) = taurine(in) + chloride(in) + 2 Na(+)(in). The enzyme catalyses beta-alanine(out) + chloride(out) + 2 Na(+)(out) = beta-alanine(in) + chloride(in) + 2 Na(+)(in). The catalysed reaction is hypotaurine(out) + chloride(out) + 2 Na(+)(out) = hypotaurine(in) + chloride(in) + 2 Na(+)(in). With respect to regulation, GABA transport is inhibited by beta-alanine. Its function is as follows. Mediates sodium- and chloride-dependent transport of gamma-aminobutyric acid (GABA). Can also mediate transport of beta-alanine and to a lower extent that of taurine and hypotaurine. The protein is Sodium- and chloride-dependent GABA transporter 3 (Slc6a11) of Rattus norvegicus (Rat).